Here is a 403-residue protein sequence, read N- to C-terminus: FAD-dependent monooxygenase tazP (403 aa).

Residues Gly-75, Arg-144, Asp-354, and Ala-367 each coordinate FAD.

It belongs to the paxM FAD-dependent monooxygenase family. It depends on FAD as a cofactor.

It participates in secondary metabolite biosynthesis. FAD-dependent monooxygenase; part of the gene cluster that mediates the biosynthesis of azaterrilone A and other azaphilones, a class of fungal metabolites characterized by a highly oxygenated pyrano-quinone bicyclic core and exhibiting a broad range of bioactivities. The first step of the pathway begins with the non-reducing polyketide synthase tazA that assembles one acetyl-CoA starter unit, five malonyl-CoA units, and catalyzes a series of Claisen condensations, methylation, PT-mediated cyclization, and finally releases the first hexaketide precursor through the R-domain. The tazA product then undergoes reduction on its terminal ketone and the following pyran-ring formation by yet undetermined enzyme(s). Dehydration and enoyl reduction, possibly involving the trans-enoyl reductase tazE leads to the next intermediate. TazD is predicted as an acetyltransferase and might catalyze the acetylation steps leading to the synthesis of azaterrilone A. Azaterrilone A is not the final product of the taz pathway and both the highly reducing polyketide synthase tazB and the dual enzyme tazHJ catalyze late steps of the pathway, leading to the production of the 2 final stereoisomers that contain additional polyketide modification whose structures have still to be determined. The chain is FAD-dependent monooxygenase tazP from Aspergillus terreus (strain NIH 2624 / FGSC A1156).